The following is a 527-amino-acid chain: Tyrosine-protein kinase TXK (527 aa).

The interval 35–79 (DEELPEKYTQRRRPWLSQLSNKKQSNTGRVQPSKRKPLPPLPPSE) is disordered. A compositionally biased stretch (polar residues) spans 51–64 (SQLSNKKQSNTGRV). Positions 68 to 73 (KRKPLP) match the Nuclear localization signal motif. An SH3 domain is found at 82–142 (EEKIQVKALY…PSNYVTENKI (61 aa)). Residue tyrosine 91 is modified to Phosphotyrosine; by autocatalysis. Residues 150 to 246 (WYHRNITRNQ…GLMTRLRYPV (97 aa)) enclose the SH2 domain. In terms of domain architecture, Protein kinase spans 271–527 (LAFIKEIGSG…RAVTEIAETW (257 aa)). Residues 277-285 (IGSGQFGVV) and lysine 299 contribute to the ATP site. Aspartate 390 functions as the Proton acceptor in the catalytic mechanism. Tyrosine 420 is modified (phosphotyrosine; by FYN and autocatalysis).

The protein belongs to the protein kinase superfamily. Tyr protein kinase family. TEC subfamily. In terms of assembly, interacts with PARP1 and EEF1A1. Interacts with SH2D2A. Interacts with FYN. Post-translationally, phosphorylated at Tyr-420 by FYN. Autophosphorylation at Tyr-91 is critical for the activation of TXK, leading to the up-regulation of IFN-gamma gene transcription. In terms of processing, the cysteine string at the N-terminus is palmitoylated and required for the proper subcellular location. As to expression, expressed in T-cells and some myeloid cell lines. Expressed in Th1/Th0 cells with IFN-gamma-producing potential.

It is found in the cytoplasm. Its subcellular location is the nucleus. The protein resides in the cell membrane. It catalyses the reaction L-tyrosyl-[protein] + ATP = O-phospho-L-tyrosyl-[protein] + ADP + H(+). Activated by phosphorylation by FYN. Non-receptor tyrosine kinase that plays a redundant role with ITK in regulation of the adaptive immune response. Regulates the development, function and differentiation of conventional T-cells and nonconventional NKT-cells. When antigen presenting cells (APC) activate T-cell receptor (TCR), a series of phosphorylation leads to the recruitment of TXK to the cell membrane, where it is phosphorylated at Tyr-420. Phosphorylation leads to TXK full activation. Also contributes to signaling from many receptors and participates in multiple downstream pathways, including regulation of the actin cytoskeleton. Like ITK, can phosphorylate PLCG1, leading to its localization in lipid rafts and activation, followed by subsequent cleavage of its substrates. In turn, the endoplasmic reticulum releases calcium in the cytoplasm and the nuclear activator of activated T-cells (NFAT) translocates into the nucleus to perform its transcriptional duty. Plays a role in the positive regulation of IFNG transcription in T-helper 1 cells as part of an IFNG promoter-binding complex with PARP1 and EEF1A1. Within the complex, phosphorylates both PARP1 and EEF1A1. Also phosphorylates key sites in LCP2 leading to the up-regulation of Th1 preferred cytokine IL-2. Phosphorylates 'Tyr-201' of CTLA4 which leads to the association of PI-3 kinase with the CTLA4 receptor. The protein is Tyrosine-protein kinase TXK (TXK) of Homo sapiens (Human).